The sequence spans 224 residues: MELGLGEPTALSHCLRPRWQPALWPTLAALALLSSVTEASLDPMSRSPASRDVPSPVLAPPTDYLPGGHTAHLCSERALRPPPQSPQPAPPPPGPALQSPPAALRGARAARAGTRSSRARATDARGCRLRSQLVPVSALGLGHSSDELIRFRFCSGSCRRARSPHDLSLASLLDAGALRSPPGSRPISQPCCRPTRYEAVSFMDVNSTWRTVDHLSATACGCLG.

The signal sequence occupies residues 1-39 (MELGLGEPTALSHCLRPRWQPALWPTLAALALLSSVTEA). Residues 40–111 (SLDPMSRSPA…AALRGARAAR (72 aa)) constitute a propeptide that is removed on maturation. The disordered stretch occupies residues 41 to 124 (LDPMSRSPAS…RSSRARATDA (84 aa)). Residues 80 to 95 (RPPPQSPQPAPPPPGP) show a composition bias toward pro residues. The span at 96–116 (ALQSPPAALRGARAARAGTRS) shows a compositional bias: low complexity. 3 disulfide bridges follow: C127-C192, C154-C220, and C158-C222. N-linked (GlcNAc...) asparagine glycosylation occurs at N206.

The protein belongs to the TGF-beta family. GDNF subfamily. As to quaternary structure, homodimer; disulfide-linked. Interacts with GFRA3 coreceptor and RET: forms a 2:2:2 ternary complex composed of ARTN ligand, GFRA3 and RET receptor. In terms of tissue distribution, cochlea. Expressed at higher level in sesorineural epithelium than in the modiolus region or substantia nigra.

It localises to the secreted. Functionally, growth factor that supports the survival of sensory and sympathetic peripheral neurons in culture and also supports the survival of dopaminergic neurons of the ventral mid-brain. Acts by binding to its coreceptor, GFRA3, leading to autophosphorylation and activation of the RET receptor. Strong attractant of gut hematopoietic cells thus promoting the formation Peyer's patch-like structures, a major component of the gut-associated lymphoid tissue. The chain is Artemin (Artn) from Rattus norvegicus (Rat).